We begin with the raw amino-acid sequence, 180 residues long: Large ribosomal subunit protein uL5 (180 aa).

The protein belongs to the universal ribosomal protein uL5 family. Part of the 50S ribosomal subunit; part of the 5S rRNA/L5/L18/L25 subcomplex. Contacts the 5S rRNA and the P site tRNA. Forms a bridge to the 30S subunit in the 70S ribosome.

Functionally, this is one of the proteins that bind and probably mediate the attachment of the 5S RNA into the large ribosomal subunit, where it forms part of the central protuberance. In the 70S ribosome it contacts protein S13 of the 30S subunit (bridge B1b), connecting the 2 subunits; this bridge is implicated in subunit movement. Contacts the P site tRNA; the 5S rRNA and some of its associated proteins might help stabilize positioning of ribosome-bound tRNAs. The sequence is that of Large ribosomal subunit protein uL5 from Lactobacillus delbrueckii subsp. bulgaricus (strain ATCC 11842 / DSM 20081 / BCRC 10696 / JCM 1002 / NBRC 13953 / NCIMB 11778 / NCTC 12712 / WDCM 00102 / Lb 14).